The primary structure comprises 366 residues: MTPEHLPTEQYEAQLAEKVVRLQSMMAPFSDLVPEVFRSPVSHYRMRAEFRIWHDGDDLYHIIFDQQTKSRIRVDSFPAASELINQLMTAMIAGVRNNPVLRHKLFQIDYLTTLSNQAVVSLLYHKKLDDEWRQEAEALRDALRAQNLNVHLIGRATKTKIALDQDYIDERLPVAGKEMIYRQVENSFTQPNAAMNIQMLEWALDVTKGSKGDLLELYCGNGNFSLALARNFDRVLATEIAKPSVAAAQYNIAANHIDNVQIIRMAAEEFTQAMNGVREFNRLQGIDLKSYQCETIFVDPPRSGLDSETEKMVQAYPRILYISCNPETLCKNLETLSQTHKVERLALFDQFPYTHHMECGVLLTAK.

S-adenosyl-L-methionine contacts are provided by glutamine 190, tyrosine 218, asparagine 223, glutamate 239, and aspartate 299. Residue cysteine 324 is the Nucleophile of the active site. Glutamate 358 serves as the catalytic Proton acceptor.

The protein belongs to the class I-like SAM-binding methyltransferase superfamily. RNA M5U methyltransferase family. TrmA subfamily.

It carries out the reaction uridine(54) in tRNA + S-adenosyl-L-methionine = 5-methyluridine(54) in tRNA + S-adenosyl-L-homocysteine + H(+). It catalyses the reaction uridine(341) in tmRNA + S-adenosyl-L-methionine = 5-methyluridine(341) in tmRNA + S-adenosyl-L-homocysteine + H(+). Dual-specificity methyltransferase that catalyzes the formation of 5-methyluridine at position 54 (m5U54) in all tRNAs, and that of position 341 (m5U341) in tmRNA (transfer-mRNA). This is tRNA/tmRNA (uracil-C(5))-methyltransferase from Escherichia coli O157:H7.